Here is a 259-residue protein sequence, read N- to C-terminus: MKQYTVKEIEALLPELEGESDPRWEMLRRDERKSVQALLARFVKQKEREKAARQRWEELMRYERELYAAGIERIAGIDEAGRGPLAGPVVAAAVILPKDAYLPGLDDSKRLTPAKREALFAQIEECAVAIGVGIVSAAEIDEWNIYEATKQAMAKAVAALSPSPEHLLVDAMTVPCALPQQRLIKGDANSASIAAASIIAKVTRDRWMHELDRRYPQYGFARHMGYGTPEHLAAIRRYGVTDEHRRSFAPVREALGVQS.

The RNase H type-2 domain maps to 72-259; it reads ERIAGIDEAG…PVREALGVQS (188 aa). D78, E79, and D170 together coordinate a divalent metal cation.

The protein belongs to the RNase HII family. Mn(2+) serves as cofactor. Requires Mg(2+) as cofactor.

It is found in the cytoplasm. The enzyme catalyses Endonucleolytic cleavage to 5'-phosphomonoester.. In terms of biological role, endonuclease that specifically degrades the RNA of RNA-DNA hybrids. This is Ribonuclease HII from Geobacillus thermodenitrificans (strain NG80-2).